Reading from the N-terminus, the 95-residue chain is ESAT-6-like protein EsxC (95 aa).

This sequence belongs to the WXG100 family. ESAT-6 subfamily.

It localises to the secreted. In Mycobacterium tuberculosis (strain CDC 1551 / Oshkosh), this protein is ESAT-6-like protein EsxC.